The primary structure comprises 119 residues: Basic phospholipase A2 taipoxin alpha chain (119 aa).

7 disulfides stabilise this stretch: cysteine 11–cysteine 72, cysteine 27–cysteine 118, cysteine 29–cysteine 45, cysteine 44–cysteine 99, cysteine 51–cysteine 92, cysteine 61–cysteine 85, and cysteine 79–cysteine 90. Residues tyrosine 28, glycine 30, and glycine 32 each coordinate Ca(2+). Residue histidine 48 is part of the active site. Position 49 (aspartate 49) interacts with Ca(2+). Aspartate 93 is a catalytic residue.

Belongs to the phospholipase A2 family. Group I subfamily. D49 sub-subfamily. Heterotrimer of alpha, beta, and gamma chains; non-covalently linked. The cofactor is Ca(2+). Expressed by the venom gland.

The protein localises to the secreted. It carries out the reaction a 1,2-diacyl-sn-glycero-3-phosphocholine + H2O = a 1-acyl-sn-glycero-3-phosphocholine + a fatty acid + H(+). Heterotrimer: Snake venom phospholipase A2 (PLA2) heterotrimer that acts as a potent presynaptic neurotoxin by blocking synaptic transmission and synaptic vesicle recycling. May act by binding in a calcium-dependent fashion to neurotonal pentraxin-1 (NPTX1) and neurotonal pentraxin-2 (NPTX2), but not to neuronal pentraxin receptor (NPTXR). Also binds to taipoxin-associated calcium binding protein 49 (RCN2), a protein localized in the lumen of endoplasmic reticulum. Functionally, monomer (alpha chain): Snake venom phospholipase A2 (PLA2) alpha chain that possesses the same high enzymatic activity as the heterotrimer. PLA2 catalyzes the calcium-dependent hydrolysis of the 2-acyl groups in 3-sn-phosphoglycerides. This Oxyuranus scutellatus scutellatus (Australian taipan) protein is Basic phospholipase A2 taipoxin alpha chain.